A 365-amino-acid chain; its full sequence is MTVMAPRTLLLLLSGALVLTETWAGSHSMRYFSTAVSRPGREEPRYIEVGYVDDTQFVRFDSDAASPRMEPRAQWVEKEGREYWEEETQRAKAFAQTFRVNLQTALGYYNQSEAGSHTIQMMSGCDLGPDGRLLRGYDQHAYDGKDYISLNEDLRSWTAADVAAQITQRKWEAANEAERTRAYLEGTCVEWLHRYLENGKETLQRAEPPKTHVTHHPVSDHEATLRCWALGFYPAEITLTWQRDGEDQTQDMELVETRPTGNGTFQKWAAVVVLSGEEHRYTCHVQHEGLPEPLTLRWEPPSQPTIPIMGIVAILAILGAVVTGAVVTAVMWRKKSSDKKGGSYSQAARSDSAQGSDVSLTACKV.

The N-terminal stretch at methionine 1 to alanine 24 is a signal peptide. Positions glycine 25–alanine 114 are alpha-1. Residues glycine 25 to isoleucine 308 are Extracellular-facing. An N-linked (GlcNAc...) asparagine glycan is attached at asparagine 110. The interval glycine 115–alanine 206 is alpha-2. Cystine bridges form between cysteine 125–cysteine 188 and cysteine 227–cysteine 283. The interval glutamate 207–tryptophan 298 is alpha-3. Residues proline 209–arginine 297 form the Ig-like C1-type domain. The interval glutamate 299–isoleucine 308 is connecting peptide. Residues methionine 309–tryptophan 332 form a helical membrane-spanning segment. Residues arginine 333–valine 365 are Cytoplasmic-facing. The interval serine 337–threonine 361 is disordered. Residues glutamine 346–serine 359 are compositionally biased toward polar residues. A phosphoserine mark is found at serine 356 and serine 359.

This sequence belongs to the MHC class I family. In terms of assembly, heterodimer of an alpha chain and a beta chain (beta-2-microglobulin).

The protein resides in the membrane. In terms of biological role, involved in the presentation of foreign antigens to the immune system. The protein is Class I histocompatibility antigen, B alpha chain of Saguinus oedipus (Cotton-top tamarin).